The primary structure comprises 625 residues: Exonuclease mut-7 homolog (625 aa).

The residue at position 17 (S17) is a Phosphoserine. In terms of domain architecture, 3'-5' exonuclease spans 410–602 (LIIVNKADEF…IYNTLIERVS (193 aa)).

This sequence belongs to the mut-7 family. Interacts with AGO1; the interaction is not RNA dependent. The cofactor is Mg(2+).

Its function is as follows. Possesses 3'-5' exoribonuclease activity. Required for 3'-end trimming of AGO1-bound miRNAs, in particular multiple-isoform miRNAs, which represents a critical step in miRNA maturation. The polypeptide is Exonuclease mut-7 homolog (Nbr) (Drosophila melanogaster (Fruit fly)).